Consider the following 376-residue polypeptide: Chaperone protein DnaJ (376 aa).

The 66-residue stretch at 5-70 folds into the J domain; that stretch reads DFYEVLGVGR…DKKAAYDQFG (66 aa). The CR-type zinc finger occupies 132–210; it reads GLTKELRIPT…CHGEGRVEKS (79 aa). Positions 145, 148, 162, 165, 184, 187, 198, and 201 each coordinate Zn(2+). CXXCXGXG motif repeat units lie at residues 145–152, 162–169, 184–191, and 198–205; these read CDACDGSG, CGTCHGQG, CPTCHGRG, and CNKCHGEG.

The protein belongs to the DnaJ family. Homodimer. It depends on Zn(2+) as a cofactor.

It is found in the cytoplasm. Its function is as follows. Participates actively in the response to hyperosmotic and heat shock by preventing the aggregation of stress-denatured proteins and by disaggregating proteins, also in an autonomous, DnaK-independent fashion. Unfolded proteins bind initially to DnaJ; upon interaction with the DnaJ-bound protein, DnaK hydrolyzes its bound ATP, resulting in the formation of a stable complex. GrpE releases ADP from DnaK; ATP binding to DnaK triggers the release of the substrate protein, thus completing the reaction cycle. Several rounds of ATP-dependent interactions between DnaJ, DnaK and GrpE are required for fully efficient folding. Also involved, together with DnaK and GrpE, in the DNA replication of plasmids through activation of initiation proteins. This Shewanella halifaxensis (strain HAW-EB4) protein is Chaperone protein DnaJ.